The following is a 698-amino-acid chain: MFKLFTARQHDKIWDFDGGIHPPEMKLQSSTVPMRIAPLPDQLIIPLQQHLGPEGELRVRAGEQVLKGQPLTVGRGRTVPVHAPTSGMITAIAPHTTAHPSGLAELCVHITPDGEDRWREQQPWADYRQRDKMALLDRIHQAGIAGLGGAGFPTASKLQGGLNGIITLIINAAECEPYITADDRLMQEHADEVITGIHILRHLLQPQQVLIGIEDNKPEAIAALQRALRGQDDIHLRVVPTKYPSGGAKQLTKILTGKEVPFGKHSSSIGVLMQNVGTVVAIKRAVIDDEPLIERVVTLTGDALSSPGNFWARIGTPVLYLLKLAGFKPQNPPMVIMGGPLMGFTLPSLDVPIVKISNCILAPAETEMGLSEPEQSCIRCGLCVDACPAGLLPQQLYWFSRGEEHEKARNHNLFDCIECGACAYVCPSNIPLVQYYRQEKAEIRALDQESARAAEAKARFEAKQARLAREKLARELRHKQAAVKLTDADQQTVDAAVSRLTRQSDGSESVINIPAGQMPDNSAVIAAREARKAQARARQAEKQQARSTEETTDVVDPRQAAVAAAIARVKAKKAAQVQHVTTDVAEAGSEAIAEDPRKAAVAAAIARVKAKKAAQAQHVTTDVAEAGSEAMAEDPRKAAVAAAIARVKAKKAAQAQHVTTDVAEAGSEAIAEDPRKAAVAAAIARVKAKKAAQAINPD.

2 4Fe-4S ferredoxin-type domains span residues 366 to 397 (TEMGLSEPEQSCIRCGLCVDACPAGLLPQQLY) and 407 to 436 (KARNHNLFDCIECGACAYVCPSNIPLVQYY). [4Fe-4S] cluster is bound by residues cysteine 377, cysteine 380, cysteine 383, cysteine 387, cysteine 416, cysteine 419, cysteine 422, and cysteine 426.

Belongs to the 4Fe4S bacterial-type ferredoxin family. RnfC subfamily. In terms of assembly, the complex is composed of six subunits: RnfA, RnfB, RnfC, RnfD, RnfE and RnfG. [4Fe-4S] cluster serves as cofactor.

It is found in the cell inner membrane. Functionally, part of a membrane-bound complex that couples electron transfer with translocation of ions across the membrane. This Yersinia pseudotuberculosis serotype O:1b (strain IP 31758) protein is Ion-translocating oxidoreductase complex subunit C.